The primary structure comprises 225 residues: NAD(P)H-quinone oxidoreductase subunit K, chloroplastic (225 aa).

[4Fe-4S] cluster-binding residues include cysteine 43, cysteine 44, cysteine 108, and cysteine 139.

Belongs to the complex I 20 kDa subunit family. In terms of assembly, NDH is composed of at least 16 different subunits, 5 of which are encoded in the nucleus. [4Fe-4S] cluster serves as cofactor.

The protein resides in the plastid. It is found in the chloroplast thylakoid membrane. It carries out the reaction a plastoquinone + NADH + (n+1) H(+)(in) = a plastoquinol + NAD(+) + n H(+)(out). It catalyses the reaction a plastoquinone + NADPH + (n+1) H(+)(in) = a plastoquinol + NADP(+) + n H(+)(out). NDH shuttles electrons from NAD(P)H:plastoquinone, via FMN and iron-sulfur (Fe-S) centers, to quinones in the photosynthetic chain and possibly in a chloroplast respiratory chain. The immediate electron acceptor for the enzyme in this species is believed to be plastoquinone. Couples the redox reaction to proton translocation, and thus conserves the redox energy in a proton gradient. The chain is NAD(P)H-quinone oxidoreductase subunit K, chloroplastic from Nuphar advena (Common spatterdock).